A 142-amino-acid chain; its full sequence is Malate dehydrogenase, mitochondrial (142 aa).

NAD(+)-binding positions include 1–6 (ASGGIG) and Asp-26. Residues Arg-73 and Arg-79 each coordinate substrate. NAD(+)-binding positions include Asn-86 and 109–111 (ITN). Position 111 (Asn-111) interacts with substrate.

This sequence belongs to the LDH/MDH superfamily. MDH type 1 family. Homodimer.

Its subcellular location is the mitochondrion matrix. It carries out the reaction (S)-malate + NAD(+) = oxaloacetate + NADH + H(+). This chain is Malate dehydrogenase, mitochondrial, found in Schistosoma mansoni (Blood fluke).